The sequence spans 147 residues: Angiogenin (147 aa).

An N-terminal signal peptide occupies residues 1 to 24; sequence MVMGLGVLLLVFVLGLGLTPPTLA. Q25 carries the pyrrolidone carboxylic acid modification. Catalysis depends on H37, which acts as the Proton acceptor. Positions 45 and 46 each coordinate tRNA. Disulfide bonds link C50-C105, C63-C116, and C81-C131. The short motif at 55 to 59 is the Nucleolar localization signal element; that stretch reads RRRGL. TRNA contacts are provided by C105 and V127. The Proton donor role is filled by H138.

Belongs to the pancreatic ribonuclease family. In terms of assembly, homodimer. Interacts with RNH1; inhibiting ANG ribonuclease activity. Interacts with PCNA.

The protein localises to the secreted. It localises to the nucleus. It is found in the nucleolus. Its subcellular location is the cytoplasm. The protein resides in the stress granule. Its activity is regulated as follows. Has weak tRNA ribonuclease activity by itself due to partial autoinhibition by its C-terminus, which folds into a short alpha-helix that partially occludes the substrate-binding site. In absence of stress, the ribonuclease activity is inhibited by RNH1 in the cytoplasm. In response to stress, dissociates from RNH1 in the cytoplasm and associates with cytoplasmic ribosomes with vacant A-sites: ribosomes directly activate the tRNA ribonuclease activity of ANG by refolding the C-terminal alpha-helix. In response to stress, the angiogenic activity of ANG is inhibited by RNH1 in the nucleus. Its function is as follows. Secreted ribonuclease that can either promote or restrict cell proliferation of target cells, depending on the context. Endocytosed in target cells via its receptor PLXNB2 and translocates to the cytoplasm or nucleus. Under stress conditions, localizes to the cytoplasm and promotes the assembly of stress granules (SGs): specifically cleaves a subset of tRNAs within anticodon loops to produce tRNA-derived stress-induced fragments (tiRNAs), resulting in translation repression and inhibition of cell proliferation. tiRNas also prevent formation of apoptosome, thereby promoting cell survival. Preferentially cleaves RNAs between a pyrimidine and an adenosine residue, suggesting that it cleaves the anticodon loop of tRNA(Ala) (32-UUAGCAU-38) after positions 33 and 36. Cleaves a subset of tRNAs, including tRNA(Ala), tRNA(Glu), tRNA(Gly), tRNA(Lys), tRNA(Val), tRNA(His), tRNA(Asp) and tRNA(Sec). Under growth conditions and in differentiated cells, translocates to the nucleus and stimulates ribosomal RNA (rRNA) transcription, including that containing the initiation site sequences of 45S rRNA, thereby promoting cell growth and proliferation. Angiogenin induces vascularization of normal and malignant tissues via its ability to promote rRNA transcription. Involved in hematopoietic stem and progenitor cell (HSPC) growth and survival by promoting rRNA transcription in growth conditions and inhibiting translation in response to stress, respectively. Mediates the crosstalk between myeloid and intestinal epithelial cells to protect the intestinal epithelial barrier integrity: secreted by myeloid cells and promotes intestinal epithelial cells proliferation and survival. Also mediates osteoclast-endothelial cell crosstalk in growing bone: produced by osteoclasts and protects the neighboring vascular cells against senescence by promoting rRNA transcription. The polypeptide is Angiogenin (ANG) (Pan troglodytes (Chimpanzee)).